The sequence spans 415 residues: F-box protein At3g13820 (415 aa).

The 50-residue stretch at 1-50 (MTTMSNLPAEVLEEILSRTPVTSLRTMRSTCKKWNNLSKKKIIPEAARKQ) folds into the F-box domain. Disordered regions lie at residues 209–229 (NDYD…EDDD) and 387–415 (KQPK…KIIG). The segment covering 210 to 229 (DYDDQEDEEEEDDEEYEDDD) has biased composition (acidic residues). A compositionally biased stretch (basic residues) spans 403-415 (NKNKKGRKIKIIG).

In Arabidopsis thaliana (Mouse-ear cress), this protein is F-box protein At3g13820.